The chain runs to 312 residues: Olfactory receptor 5p57 (312 aa).

Over 1–25 the chain is Extracellular; it reads MEPGNYTVVTEFILLGLTDDITVSV. Asparagine 5 carries an N-linked (GlcNAc...) asparagine glycan. The chain crosses the membrane as a helical span at residues 26–46; it reads ILFVMFLIVYSVTLMGNLNII. Residues 47–54 are Cytoplasmic-facing; sequence VLIRTSPQ. Residues 55–75 traverse the membrane as a helical segment; the sequence is LHTPMYLFLSHLAFLDIGYSS. Residues 76–99 are Extracellular-facing; the sequence is SVTPIMLRGFLRKGTFIPVAGCVA. An intrachain disulfide couples cysteine 97 to cysteine 189. Residues 100–120 form a helical membrane-spanning segment; it reads QLCIVVAFGTSESFLLASMAY. Residues 121–133 are Cytoplasmic-facing; sequence DRYVAICSPLLYS. A helical transmembrane segment spans residues 134 to 154; sequence TQMSSTVCILLVGTSYLGGWV. Topologically, residues 155–196 are extracellular; the sequence is NAWIFTGCSLNLSFCGPNKINHFFCDYSPLLKLSCSHDFSFE. Asparagine 165 carries N-linked (GlcNAc...) asparagine glycosylation. Residues 197–217 traverse the membrane as a helical segment; it reads VIPAISSGSIIVVTVFIIALS. The Cytoplasmic segment spans residues 218–237; sequence YVYILVSILKMRSTEGRQKA. A helical membrane pass occupies residues 238 to 258; the sequence is FSTCTSHLTAVTLFFGTITFI. At 259 to 271 the chain is on the extracellular side; the sequence is YVMPQSSYSTDQN. A helical transmembrane segment spans residues 272–292; that stretch reads KVVSVFYTVVIPMLNPLIYSF. The Cytoplasmic portion of the chain corresponds to 293-312; that stretch reads RNKEVKEAMKKLIAKTHWWS.

This sequence belongs to the G-protein coupled receptor 1 family.

Its subcellular location is the cell membrane. In terms of biological role, probable odorant receptor, which recognizes only aliphatic alcohols, suggesting that it may convey a 'woody' or 'sweet' sour. The chain is Olfactory receptor 5p57 from Mus musculus (Mouse).